A 459-amino-acid chain; its full sequence is Glycosyl hydrolase family 109 protein 1 (459 aa).

A signal peptide (tat-type signal) is located at residues 1–31; that stretch reads MHNIHRRHFLKAAGAVTAGLVTANIALNANA. NAD(+) is bound by residues 64–65, D86, 135–138, 155–156, and N184; these read ER, WEWH, and EV. Residues Y213, R232, 244 to 247, and Y326 each bind substrate; that span reads YPTH. NAD(+) is bound at residue Y244.

Belongs to the Gfo/Idh/MocA family. Glycosyl hydrolase 109 subfamily. The cofactor is NAD(+). Predicted to be exported by the Tat system. The position of the signal peptide cleavage has not been experimentally proven.

Its function is as follows. Glycosidase. The protein is Glycosyl hydrolase family 109 protein 1 of Shewanella sp. (strain MR-7).